The sequence spans 453 residues: MRYLPLTPEDRADMLGVIGAETIDALFVDVPAVAYRKDPVDLPFHAGELEVEREMLALSRRNRSASEGPFFVGAGAYRHHVPATVDHIIQRSEFLTSYTPYQPEIAQGTLQVLFEFQTQVAALTGMEVANASLYDGSTATAEAVMMATRVTRRGKAVLSGGVHPHYVGTVETLAHAAGVATERLKAAIDAEDAVIAAIDADTACVVVQTPNVFGTATDVSKIAAAAQAAGALLIVVTTEAVSYGLLKSPGEMGADIVVAEGQSIGNGLNFGGPYVGLFACKEKYVRQAPGRLCGETVDADGRRGFVLTLSTREQHIRRDKATSNICTNSGLCALAFSIHMSLLGEKGLRQLALVNHHKAVKLRDALAAVPGVEVLTPRFFNEFAIKVPGNAAELVETLAANGVIGGVPFSRLDPGAGLDNVLLVAATETTPDSDIALFSKALSKVLAPKGSNQ.

The protein belongs to the GcvP family. N-terminal subunit subfamily. As to quaternary structure, the glycine cleavage system is composed of four proteins: P, T, L and H. In this organism, the P 'protein' is a heterodimer of two subunits.

It catalyses the reaction N(6)-[(R)-lipoyl]-L-lysyl-[glycine-cleavage complex H protein] + glycine + H(+) = N(6)-[(R)-S(8)-aminomethyldihydrolipoyl]-L-lysyl-[glycine-cleavage complex H protein] + CO2. In terms of biological role, the glycine cleavage system catalyzes the degradation of glycine. The P protein binds the alpha-amino group of glycine through its pyridoxal phosphate cofactor; CO(2) is released and the remaining methylamine moiety is then transferred to the lipoamide cofactor of the H protein. The chain is Probable glycine dehydrogenase (decarboxylating) subunit 1 from Caulobacter sp. (strain K31).